Here is a 157-residue protein sequence, read N- to C-terminus: MAEEQQPRILLEVRKLYVGDLSVEVPNAPEVFQQSLNPEISLGINHENKKLKEENYYSVHLRLTVTAKDSTSSSVIYLVEATQTGIFEIVGLDESQLQHALNVYCTTVLYPYAREVISSAITHAGFPSLYLQPINFDALYQQQLQQEQNTTAQGGEA.

It belongs to the SecB family. As to quaternary structure, homotetramer, a dimer of dimers. One homotetramer interacts with 1 SecA dimer.

The protein localises to the cytoplasm. Its function is as follows. One of the proteins required for the normal export of preproteins out of the cell cytoplasm. It is a molecular chaperone that binds to a subset of precursor proteins, maintaining them in a translocation-competent state. It also specifically binds to its receptor SecA. The chain is Protein-export protein SecB from Dichelobacter nodosus (strain VCS1703A).